A 42-amino-acid chain; its full sequence is Histone H1B (42 aa).

The H15 domain maps to 1-42 (TYYELIKAAILALKERNGSSAQAIKKYILENNKIEFQQTFLR).

It belongs to the histone H1/H5 family.

It localises to the nucleus. The protein localises to the chromosome. In terms of biological role, histones H1 are necessary for the condensation of nucleosome chains into higher-order structures. The polypeptide is Histone H1B (Olisthodiscus luteus (Marine phytoflagellate)).